Here is a 479-residue protein sequence, read N- to C-terminus: Glycogen synthase (479 aa).

Lysine 15 serves as a coordination point for ADP-alpha-D-glucose.

This sequence belongs to the glycosyltransferase 1 family. Bacterial/plant glycogen synthase subfamily.

The catalysed reaction is [(1-&gt;4)-alpha-D-glucosyl](n) + ADP-alpha-D-glucose = [(1-&gt;4)-alpha-D-glucosyl](n+1) + ADP + H(+). It participates in glycan biosynthesis; glycogen biosynthesis. Functionally, synthesizes alpha-1,4-glucan chains using ADP-glucose. In Histophilus somni (strain 129Pt) (Haemophilus somnus), this protein is Glycogen synthase.